Consider the following 156-residue polypeptide: Transcription antitermination protein NusB (156 aa).

The protein belongs to the NusB family.

Its function is as follows. Involved in transcription antitermination. Required for transcription of ribosomal RNA (rRNA) genes. Binds specifically to the boxA antiterminator sequence of the ribosomal RNA (rrn) operons. The sequence is that of Transcription antitermination protein NusB from Vibrio cholerae serotype O1 (strain ATCC 39541 / Classical Ogawa 395 / O395).